A 440-amino-acid polypeptide reads, in one-letter code: MDPPCSLSARFEGSFAYLTIRDRLPQILTKVIDTVHRNKNKFFEDNGEEGVEAEKKALSFFSKLRNEIQTDKPVLPLTDNQSDTELWNQYLDYQKTLLNKGETPSWFKSPWLYVECYMYRRIQEGLVLSPPISEYDVFREGKTESFFQSQPAIIALCTYLQELKNNVANLSENQKKEELSKLLQVCLWGNKCDLSISGGLDNSQKFSILSSLESFMPFILVNDMESVWAVLSGSKNLESGKELMKRVDIVLDNAGFELITDFVLADALLSLRLASEVHFHAKCMPWFVSDTTKHDFNWTIKHLQAANHKWMSKCGVNWKENLQRSCWIYHEHLFWTLPHEFCMMAQTAPDLYSELQKSDLVIFKGDLNYRKLTGDRKWEFTVPFFQALTTFHPAPLCSIRTLKADVQVGLKPGVGEQLSSNEPDWMISGKYGVVQLSTSV.

Mn(2+)-binding residues include Asp252 and Asn253. Residue 252-253 (DN) participates in substrate binding. Glu257 and Asp290 together coordinate S-adenosyl-L-methionine. Asp290 is a Mn(2+) binding site. Residues 366–370 (DLNYR) and Lys403 each bind substrate. The Subfamily III RTxK motif signature appears at 400–403 (RTLK).

It belongs to the damage-control phosphatase family. Sugar phosphate phosphatase III subfamily. Mn(2+) is required as a cofactor. It depends on Ni(2+) as a cofactor. In terms of processing, automethylated.

The catalysed reaction is beta-D-fructose 1-phosphate + H2O = D-fructose + phosphate. It catalyses the reaction beta-D-fructose 6-phosphate = dihydroxyacetone + D-glyceraldehyde 3-phosphate. The enzyme catalyses L-glutamyl-[protein] + S-adenosyl-L-methionine = [protein]-L-glutamate 5-O-methyl ester + S-adenosyl-L-homocysteine. Metal-dependent phosphatase that shows phosphatase activity against several substrates, including fructose-1-phosphate and fructose-6-phosphate. Its preference for fructose-1-phosphate, a strong glycating agent that causes DNA damage rather than a canonical yeast metabolite, suggests a damage-control function in hexose phosphate metabolism. Has also been shown to have O-methyltransferase activity that methylates glutamate residues of target proteins to form gamma-glutamyl methyl ester residues. Possibly methylates PCNA, suggesting it is involved in the DNA damage response. The protein is Damage-control phosphatase ARMT1 of Xenopus tropicalis (Western clawed frog).